The sequence spans 308 residues: Putative ankyrin repeat protein R835 (308 aa).

ANK repeat units lie at residues 100–129, 152–181, 190–217, 218–247, 249–277, and 279–305; these read DINE…NIDL, PMNK…YVDF, SEYT…GANY, KSSY…DLEK, GLRS…EIDY, and YYIY…SKQI.

This Acanthamoeba polyphaga (Amoeba) protein is Putative ankyrin repeat protein R835.